We begin with the raw amino-acid sequence, 154 residues long: MARVTDKITHLIELVIKDMCYELVGIEYVASGKHSILRVFIDTDKKGVGVNDCEKVSRQLSSIFDVEEPISGQYTLEVSSPGIERPLFHKEHYQRFLGANVKLRMVRPIDGRRNFFGVIGCVNEADNTFELVGELDLVILDIDLIEKANLVVDF.

It belongs to the RimP family.

Its subcellular location is the cytoplasm. Required for maturation of 30S ribosomal subunits. The protein is Ribosome maturation factor RimP of Ruthia magnifica subsp. Calyptogena magnifica.